The chain runs to 119 residues: HTH-type transcriptional regulator SarX (119 aa).

Positions 55–78 (LKTAMDELDLSRTKLLVSIRRLIE) form a DNA-binding region, H-T-H motif.

Belongs to the SarA family.

It localises to the cytoplasm. Functionally, involved in the regulation of virulence genes. Acts as a repressor of the agr locus and consequently targets genes regulated by the agr system such as sspA, hla and hlb. Binds directly to the agr promoter region. The polypeptide is HTH-type transcriptional regulator SarX (sarX) (Staphylococcus aureus (strain USA300)).